A 496-amino-acid chain; its full sequence is Cytochrome P450 71D178 (496 aa).

The helical; Signal-anchor for type II membrane protein transmembrane segment at 1-21 (MDISISWVVIILLVLSYLILM) threads the bilayer. Cys-435 contributes to the heme binding site.

The protein belongs to the cytochrome P450 family. Heme is required as a cofactor. In terms of tissue distribution, expressed in flowers, leaves and stems, especially in glandular trichomes.

It localises to the membrane. The catalysed reaction is (4S)-limonene + reduced [NADPH--hemoprotein reductase] + O2 = (1S,5R)-carveol + oxidized [NADPH--hemoprotein reductase] + H2O + H(+). The enzyme catalyses gamma-terpinene + 2 reduced [NADPH--hemoprotein reductase] + 2 O2 = carvacrol + 2 oxidized [NADPH--hemoprotein reductase] + 3 H2O + 2 H(+). It catalyses the reaction gamma-terpinene + 2 reduced [NADPH--hemoprotein reductase] + 2 O2 = thymol + 2 oxidized [NADPH--hemoprotein reductase] + 3 H2O + 2 H(+). It carries out the reaction (4R)-limonene + reduced [NADPH--hemoprotein reductase] + O2 = (1R,6S)-isopiperitenol + oxidized [NADPH--hemoprotein reductase] + H2O + H(+). It participates in secondary metabolite biosynthesis; terpenoid biosynthesis. Functionally, involved in the biosynthesis of phenolic monoterpenes natural products thymol and carvacrol which have a broad range of biological activities acting as antimicrobial compounds, insecticides, antioxidants and pharmaceutical agents. Catalyzes the C2- and C3-hydroxylation of gamma-terpinene to produce carvacrol and thymol, respectively. Also mediates the C6-hydroxylation of (4S)-limonene to form carveol and the C3-hydroxylation of (4R)-limonene to generate (+)-trans-isopiperitenol. This is Cytochrome P450 71D178 from Origanum vulgare (Wild marjoram).